A 265-amino-acid polypeptide reads, in one-letter code: Phosphate import ATP-binding protein PstB 2 (265 aa).

The region spanning 13 to 260 (FRTENLNVYY…PTKQATRDYV (248 aa)) is the ABC transporter domain. 45–52 (GPSGCGKS) provides a ligand contact to ATP.

This sequence belongs to the ABC transporter superfamily. Phosphate importer (TC 3.A.1.7) family. The complex is composed of two ATP-binding proteins (PstB), two transmembrane proteins (PstC and PstA) and a solute-binding protein (PstS).

The protein localises to the cell inner membrane. It catalyses the reaction phosphate(out) + ATP + H2O = ADP + 2 phosphate(in) + H(+). In terms of biological role, part of the ABC transporter complex PstSACB involved in phosphate import. Responsible for energy coupling to the transport system. This is Phosphate import ATP-binding protein PstB 2 from Synechococcus sp. (strain JA-3-3Ab) (Cyanobacteria bacterium Yellowstone A-Prime).